Here is a 696-residue protein sequence, read N- to C-terminus: D-(-)-3-hydroxybutyrate oligomer hydrolase (696 aa).

Positions 1-20 are cleaved as a signal peptide; that stretch reads MTRLGWGRRMVFGAALAAVA. The Charge relay system role is filled by S309.

The protein belongs to the D-(-)-3-hydroxybutyrate oligomer hydrolase family.

The protein localises to the secreted. It catalyses the reaction (3R)-hydroxybutanoate dimer + H2O = 2 (R)-3-hydroxybutanoate + H(+). The protein operates within lipid metabolism; butanoate metabolism. In terms of biological role, participates in the degradation of poly-3-hydroxybutyrate (PHB). It works downstream of poly(3-hydroxybutyrate) depolymerase, hydrolyzing D(-)-3-hydroxybutyrate oligomers of various length (3HB-oligomers) into 3HB-monomers. The sequence is that of D-(-)-3-hydroxybutyrate oligomer hydrolase from Burkholderia lata (strain ATCC 17760 / DSM 23089 / LMG 22485 / NCIMB 9086 / R18194 / 383).